The chain runs to 518 residues: Serine--tRNA ligase, mitochondrial (518 aa).

A mitochondrion-targeting transit peptide spans 1 to 34 (MAASMARLWWPFLARQGLRSRGRCVCSQNPRRSF). Lys-110 bears the N6-acetyllysine mark. Lys-195 carries the post-translational modification N6-succinyllysine. 299-301 (TAE) provides a ligand contact to L-serine. 330–332 (RAE) provides a ligand contact to ATP. Lys-337 carries the post-translational modification N6-succinyllysine. Val-345 serves as a coordination point for ATP. Glu-352 lines the L-serine pocket. 418-421 (EVTS) is a binding site for ATP. Thr-453 contributes to the L-serine binding site. Positions 497–518 (PLQYIGPNQPQKPRLPGQSATR) are disordered.

It belongs to the class-II aminoacyl-tRNA synthetase family. Type-1 seryl-tRNA synthetase subfamily. Homodimer. The tRNA molecule probably binds across the dimer. In terms of tissue distribution, ubiquitous.

The protein localises to the mitochondrion matrix. It carries out the reaction tRNA(Ser) + L-serine + ATP = L-seryl-tRNA(Ser) + AMP + diphosphate + H(+). The catalysed reaction is tRNA(Sec) + L-serine + ATP = L-seryl-tRNA(Sec) + AMP + diphosphate + H(+). The protein operates within aminoacyl-tRNA biosynthesis; selenocysteinyl-tRNA(Sec) biosynthesis; L-seryl-tRNA(Sec) from L-serine and tRNA(Sec): step 1/1. Functionally, catalyzes the attachment of serine to tRNA(Ser). Is also probably able to aminoacylate tRNA(Sec) with serine, to form the misacylated tRNA L-seryl-tRNA(Sec), which will be further converted into selenocysteinyl-tRNA(Sec). This Mus musculus (Mouse) protein is Serine--tRNA ligase, mitochondrial (Sars2).